A 357-amino-acid polypeptide reads, in one-letter code: Guanine nucleotide-binding protein alpha-1 subunit (357 aa).

Gly-2 carries the N-myristoyl glycine lipid modification. Cys-4 carries the S-palmitoyl cysteine lipid modification. One can recognise a G-alpha domain in the interval 32-357 (NIIKLLLLGA…STKLKGCGLY (326 aa)). The interval 35 to 48 (KLLLLGAGESGKST) is G1 motif. GTP is bound by residues Glu-43, Ser-44, Gly-45, Lys-46, Ser-47, Thr-48, Asp-151, Leu-176, Thr-182, Gly-204, Asn-270, Lys-271, Asp-273, and Ala-329. Ser-47 lines the Mg(2+) pocket. Residues 174-182 (DILHTRVPT) form a G2 motif region. Thr-182 is a binding site for Mg(2+). The G3 motif stretch occupies residues 197–206 (FRVFDVGGQR). Residues 266-273 (ILFLNKID) form a G4 motif region. The G5 motif stretch occupies residues 327-332 (TCATDT).

Belongs to the G-alpha family. In terms of assembly, g proteins are composed of 3 units; alpha, beta and gamma. The alpha chain contains the guanine nucleotide binding site. Requires Mg(2+) as cofactor.

Its function is as follows. Guanine nucleotide-binding proteins (G proteins) are involved as modulators or transducers in various transmembrane signaling systems. This chain is Guanine nucleotide-binding protein alpha-1 subunit (gpa-1), found in Caenorhabditis elegans.